The chain runs to 114 residues: Large ribosomal subunit protein bL19 (114 aa).

It belongs to the bacterial ribosomal protein bL19 family.

Functionally, this protein is located at the 30S-50S ribosomal subunit interface and may play a role in the structure and function of the aminoacyl-tRNA binding site. The chain is Large ribosomal subunit protein bL19 from Clavibacter michiganensis subsp. michiganensis (strain NCPPB 382).